Here is a 524-residue protein sequence, read N- to C-terminus: Fusicoccadiene C-8 hydroxylase (524 aa).

A helical transmembrane segment spans residues 16–36 (LQLLCIGPLVYACVSFIIKIV). Residues Asn-126 and Asn-344 are each glycosylated (N-linked (GlcNAc...) asparagine). Position 465 (Cys-465) interacts with heme. A glycan (N-linked (GlcNAc...) asparagine) is linked at Asn-496.

It belongs to the cytochrome P450 family. Requires heme as cofactor.

Its subcellular location is the membrane. Its pathway is mycotoxin biosynthesis. Its function is as follows. Cytochrome P450 monooxygenase; part of the 2 gene clusters that mediate the biosynthesis of fusicoccins, diterpene glucosides that display phytohormone-like activity and function as potent activators of plasma membrane H(+)-ATPases in plants by modifying 14-3-3 proteins and cause the plant disease constriction canker. The first step in the pathway is performed by the fusicoccadiene synthase PaFS that possesses both prenyl transferase and terpene cyclase activity, converting isopentenyl diphosphate and dimethylallyl diphosphate into geranylgeranyl diphosphate (GGDP) and successively converting GGDP into fusicocca-2,10(14)-diene, a precursor for fusicoccin H. The second step is the oxidation at the C-8 position by the cytochrome P450 monooxygenase PaP450-2 to yield fusicocca-2,10(14)-diene-8-beta-ol. The cytochrome P450 monooxygenase PaP450-1 then catalyzes the hydroxylation at the C-16 position to produce fusicocca-2,10(14)-diene-8-beta,16-diol. The dioxygenase fc-dox then catalyzes the 16-oxydation of fusicocca-2,10(14)-diene-8-beta,16-diol to yield an aldehyde (8-beta-hydroxyfusicocca-1,10(14)-dien-16-al). The short-chain dehydrogenase/reductase fc-sdr catalyzes the reduction of the aldehyde to yield fusicocca-1,10(14)-diene-8-beta,16-diol. The next step is the hydroxylation at C-9 performed by the cytochrome P450 monooxygenase PaP450-3 that leads to fusicoccin H aglycon which is glycosylated to fusicoccin H by the O-glycosyltransferase PaGT. Hydroxylation at C-12 by the cytochrome P450 monooxygenase PaP450-4 leads then to the production of fusicoccin Q and is followed by methylation by the O-methyltransferase PaMT to yield fusicoccin P. Fusicoccin P is further converted to fusicoccin J via prenylation by the O-glucose prenyltransferase PaPT. Cytochrome P450 monooxygenase PaP450-5 then performs hydroxylation at C-19 to yield dideacetyl-fusicoccin A which is acetylated to 3'-O-deacetyl-fusicoccin A by the O-acetyltransferase PaAT-2. Finally, a another acetylation by the O-acetyltransferase PaAT-1 yields fusicoccin A. This Phomopsis amygdali (Fusicoccum amygdali) protein is Fusicoccadiene C-8 hydroxylase.